The chain runs to 402 residues: Putative F-box protein At1g70970 (402 aa).

An F-box domain is found at 4 to 52 (SSSETLHVEDLQTEIMSWLPLKSLLRFVIVSKKWASIIRGEQFKALYLR).

The protein is Putative F-box protein At1g70970 of Arabidopsis thaliana (Mouse-ear cress).